The sequence spans 554 residues: Carboxypeptidase Y homolog A (554 aa).

An N-terminal signal peptide occupies residues 1–17; it reads MRISASTVLLGAASAAS. Residues 18–137 constitute a propeptide that is removed on maturation; it reads AASFQNQAQH…QLDNFNLRVK (120 aa). Disulfide bonds link C191/C431, C325/C339, C349/C372, C356/C365, and C394/C401. Residue N222 is glycosylated (N-linked (GlcNAc...) asparagine). S278 is a catalytic residue. D470 is a catalytic residue. N518 carries an N-linked (GlcNAc...) asparagine glycan. Residue H529 is part of the active site.

This sequence belongs to the peptidase S10 family.

It localises to the vacuole. It carries out the reaction Release of a C-terminal amino acid with broad specificity.. Its function is as follows. Vacuolar carboxypeptidase involved in degradation of small peptides. Digests preferentially peptides containing an aliphatic or hydrophobic residue in P1' position, as well as methionine, leucine or phenylalanine in P1 position of ester substrate. This is Carboxypeptidase Y homolog A (cpyA) from Neurospora crassa (strain ATCC 24698 / 74-OR23-1A / CBS 708.71 / DSM 1257 / FGSC 987).